The primary structure comprises 238 residues: uncharacterized protein (238 aa).

An N-terminal signal peptide occupies residues 1 to 20 (MNNVKLLIAGSAFFAMSAQA).

It to E.coli GltF.

This is an uncharacterized protein from Escherichia coli (strain K12).